Here is a 417-residue protein sequence, read N- to C-terminus: Methylthioribose-1-phosphate isomerase (417 aa).

The Proton donor role is filled by aspartate 285.

The protein belongs to the eIF-2B alpha/beta/delta subunits family. MtnA subfamily.

It is found in the cytoplasm. The protein resides in the nucleus. The catalysed reaction is 5-(methylsulfanyl)-alpha-D-ribose 1-phosphate = 5-(methylsulfanyl)-D-ribulose 1-phosphate. It participates in amino-acid biosynthesis; L-methionine biosynthesis via salvage pathway; L-methionine from S-methyl-5-thio-alpha-D-ribose 1-phosphate: step 1/6. In terms of biological role, catalyzes the interconversion of methylthioribose-1-phosphate (MTR-1-P) into methylthioribulose-1-phosphate (MTRu-1-P). In Lachancea thermotolerans (strain ATCC 56472 / CBS 6340 / NRRL Y-8284) (Yeast), this protein is Methylthioribose-1-phosphate isomerase.